Here is a 554-residue protein sequence, read N- to C-terminus: Arginine--tRNA ligase (554 aa).

The short motif at 130–140 (ANPTGDLHIGH) is the 'HIGH' region element.

This sequence belongs to the class-I aminoacyl-tRNA synthetase family. As to quaternary structure, monomer.

The protein resides in the cytoplasm. It carries out the reaction tRNA(Arg) + L-arginine + ATP = L-arginyl-tRNA(Arg) + AMP + diphosphate. The polypeptide is Arginine--tRNA ligase (Staphylococcus carnosus (strain TM300)).